A 910-amino-acid polypeptide reads, in one-letter code: Eukaryotic translation initiation factor 3 subunit C (910 aa).

Positions 1-21 (MSRFFANGSDSESESSEDEIQ) are disordered. Acidic residues predominate over residues 11–20 (SESESSEDEI). Residues Ser-34, Ser-165, Ser-176, and Ser-185 each carry the phosphoserine modification. Positions 157–279 (FREAPDQESE…IRKRAEDDED (123 aa)) are disordered. Over residues 162–186 (DQESEAEDEVVALESDGGDAGDDSD) the composition is skewed to acidic residues. Residues 188-207 (GVKPTEAAPKAVKTAPAKAA) are compositionally biased toward low complexity. Acidic residues predominate over residues 209 to 235 (ADDDDSDDSIDWDSDSESETESSDDEN). A compositionally biased stretch (basic and acidic residues) spans 240–268 (MRERFLKRTTEKEEKDDDKRKDKRKEQKI). Residues 639–815 (FHMHINLELL…ETVVMHRSEP (177 aa)) form the PCI domain. The tract at residues 847 to 910 (FFQRGNMGNR…QQQVQTIDEE (64 aa)) is disordered. The segment covering 862–874 (NRNQNNQGGNWLG) has biased composition (low complexity). Residues 882–891 (RNRNQRGHHK) are compositionally biased toward basic residues. Positions 895–910 (DRQQQQQQQVQTIDEE) are enriched in low complexity.

Belongs to the eIF-3 subunit C family. Component of the eukaryotic translation initiation factor 3 (eIF-3) complex. The eIF-3 complex interacts with pix.

It is found in the cytoplasm. Functionally, component of the eukaryotic translation initiation factor 3 (eIF-3) complex, which is involved in protein synthesis of a specialized repertoire of mRNAs and, together with other initiation factors, stimulates binding of mRNA and methionyl-tRNAi to the 40S ribosome. The eIF-3 complex specifically targets and initiates translation of a subset of mRNAs involved in cell proliferation. The chain is Eukaryotic translation initiation factor 3 subunit C from Drosophila erecta (Fruit fly).